The sequence spans 513 residues: MPRKKVTDGSGPGNGAARPANRKKAAASGKKRSRHEFSSDEDDLDGSPGSDGGFQGHNNKRGPAKGATKAPTAVIVTEPEHSKEKIKLEGSKAKGQLLIFGATNWDLIGRKEVPKQQAAYRNLGQNLWGPHRYGCLTGVQVRSVASGSCAAHSLLITVEGKLWSWGRNDKGQLGHGDIKRIDVPKLIESLKGEVFVHAACGRNHTLALTENGSVYAFGENKMGQLGLGNKTDAVPSPAQILYNGQPITKVACGAEFSMIMDCKGNLYSFGCPEYGQLGHNSDGKYIARAQRIEYDCELIARRIAIFIEKTKDGQILPVPNVVVRDIACGINHSLILDSQKRVFSWGFGGYGRLGHSEQRDEMVPRLVKLFDFPGRGAAQIYAGATCSFAVSEMGGLFFWGATNTSRDSTMYPKAVQDLCGWKVRSLACGKSSIIVAADESTISWGPSPTFGELGYGDNKAKSSTTAQEVKTLDGIYSDQVIMGNSHTLVVARDETEQDKEKLKKLPEYNPRTL.

The interval 1-70 is disordered; the sequence is MPRKKVTDGS…RGPAKGATKA (70 aa). Basic residues predominate over residues 20–34; the sequence is ANRKKAAASGKKRSR. RCC1 repeat units lie at residues 94–156, 159–210, 212–262, 264–338, 339–392, 394–438, and 439–492; these read KGQL…SLLI, EGKL…ALTE, GSVY…IMDC, GNLY…ILDS, QKRV…AVSE, GGLF…VAAD, and ESTI…VVAR. Positions 309–316 are required for interaction with RAC1; sequence KTKDGQIL. Residues 492-506 show a composition bias toward basic and acidic residues; it reads RDETEQDKEKLKKLP. The disordered stretch occupies residues 492 to 513; sequence RDETEQDKEKLKKLPEYNPRTL.

Interacts with RAC1. Interacts with CORO1C.

The protein resides in the nucleus. The protein localises to the nucleolus. It localises to the cytoplasm. It is found in the cytoskeleton. Its subcellular location is the chromosome. The protein resides in the centromere. The protein localises to the spindle. It localises to the midbody. It is found in the cell membrane. In terms of biological role, multifunctional protein that may affect its functions by regulating the activity of small GTPases, such as RAC1 and RALA. Required for normal progress through the cell cycle, both during interphase and during mitosis. Required for normal attachment of kinetochores to mitotic spindles. Required for normal organization of the microtubule cytoskeleton in interphase cells. Interferes with the activation of RAC1 by guanine nucleotide exchange factors. Prevents accumulation of active, GTP-bound RAC1, and suppresses RAC1-mediated reorganization of the actin cytoskeleton and formation of membrane protrusions. Required for normal cellular responses to contacts with the extracellular matrix of adjacent cells, and for directional cell migration. This Xenopus laevis (African clawed frog) protein is Protein RCC2 homolog (rcc2).